A 502-amino-acid polypeptide reads, in one-letter code: Glycerol kinase (502 aa).

Thr-14 lines the ADP pocket. The ATP site is built by Thr-14, Thr-15, and Ser-16. Thr-14 contacts sn-glycerol 3-phosphate. Residue Arg-18 participates in ADP binding. Arg-84, Glu-85, Tyr-136, and Asp-246 together coordinate sn-glycerol 3-phosphate. 5 residues coordinate glycerol: Arg-84, Glu-85, Tyr-136, Asp-246, and Gln-247. Residues Thr-268 and Gly-311 each contribute to the ADP site. Positions 268, 311, 315, and 412 each coordinate ATP. Residues Gly-412 and Asn-416 each coordinate ADP.

Belongs to the FGGY kinase family. Homotetramer and homodimer (in equilibrium). Heterodimer with EIIA-Glc. Binds 1 zinc ion per glycerol kinase EIIA-Glc dimer. The zinc ion is important for dimerization.

The catalysed reaction is glycerol + ATP = sn-glycerol 3-phosphate + ADP + H(+). Its pathway is polyol metabolism; glycerol degradation via glycerol kinase pathway; sn-glycerol 3-phosphate from glycerol: step 1/1. With respect to regulation, activity of this regulatory enzyme is affected by several metabolites. Allosterically and non-competitively inhibited by fructose 1,6-bisphosphate (FBP) and unphosphorylated phosphocarrier protein EIIA-Glc (III-Glc), an integral component of the bacterial phosphotransferase (PTS) system. Functionally, key enzyme in the regulation of glycerol uptake and metabolism. Catalyzes the phosphorylation of glycerol to yield sn-glycerol 3-phosphate. This chain is Glycerol kinase, found in Shigella flexneri.